The following is a 498-amino-acid chain: Probable cytosol aminopeptidase (498 aa).

Lys262 and Asp267 together coordinate Mn(2+). Lys274 is a catalytic residue. The Mn(2+) site is built by Asp285, Asp344, and Glu346. Residue Arg348 is part of the active site.

It belongs to the peptidase M17 family. Requires Mn(2+) as cofactor.

The protein resides in the cytoplasm. The enzyme catalyses Release of an N-terminal amino acid, Xaa-|-Yaa-, in which Xaa is preferably Leu, but may be other amino acids including Pro although not Arg or Lys, and Yaa may be Pro. Amino acid amides and methyl esters are also readily hydrolyzed, but rates on arylamides are exceedingly low.. It carries out the reaction Release of an N-terminal amino acid, preferentially leucine, but not glutamic or aspartic acids.. In terms of biological role, presumably involved in the processing and regular turnover of intracellular proteins. Catalyzes the removal of unsubstituted N-terminal amino acids from various peptides. This Phytoplasma mali (strain AT) protein is Probable cytosol aminopeptidase.